A 189-amino-acid polypeptide reads, in one-letter code: Peptidyl-tRNA hydrolase (189 aa).

Position 15 (Tyr-15) interacts with tRNA. The Proton acceptor role is filled by His-20. TRNA contacts are provided by Phe-66, Asn-68, and Asn-114.

It belongs to the PTH family. In terms of assembly, monomer.

Its subcellular location is the cytoplasm. It catalyses the reaction an N-acyl-L-alpha-aminoacyl-tRNA + H2O = an N-acyl-L-amino acid + a tRNA + H(+). Hydrolyzes ribosome-free peptidyl-tRNAs (with 1 or more amino acids incorporated), which drop off the ribosome during protein synthesis, or as a result of ribosome stalling. Its function is as follows. Catalyzes the release of premature peptidyl moieties from peptidyl-tRNA molecules trapped in stalled 50S ribosomal subunits, and thus maintains levels of free tRNAs and 50S ribosomes. The polypeptide is Peptidyl-tRNA hydrolase (Streptococcus pneumoniae (strain P1031)).